A 516-amino-acid polypeptide reads, in one-letter code: Flavonoid 3',5'-hydroxylase (516 aa).

A heme-binding site is contributed by Cys-453.

Belongs to the cytochrome P450 family. It depends on heme as a cofactor.

The catalysed reaction is a 3',5'-unsubstituted flavanone + 2 reduced [NADPH--hemoprotein reductase] + 2 O2 = a 3',5'-dihydroxyflavanone + 2 oxidized [NADPH--hemoprotein reductase] + 2 H2O + 2 H(+). Its pathway is pigment biosynthesis; anthocyanin biosynthesis. In terms of biological role, catalyzes the 3'5'-hydroxylation of naringenin and eriodictyol to form 5,7,3,'4',5'-pentahydroxyflavanone and 3',5'-hydroxylation of dihydrokaempferol and dihydroquercetin to form dihydromyricetin. This Gentiana triflora (Clustered gentian) protein is Flavonoid 3',5'-hydroxylase (CYP75A4).